Reading from the N-terminus, the 103-residue chain is Putative membrane protein insertion efficiency factor (103 aa).

It belongs to the UPF0161 family.

The protein resides in the cell inner membrane. In terms of biological role, could be involved in insertion of integral membrane proteins into the membrane. In Chlamydia abortus (strain DSM 27085 / S26/3) (Chlamydophila abortus), this protein is Putative membrane protein insertion efficiency factor.